The primary structure comprises 424 residues: F-box protein At2g38590 (424 aa).

Residues 2–47 (TTMISNLPRVLIEEIFFRVPLKSLRAVRLTCKSWNTLSKSRSFRKL) enclose the F-box domain.

This chain is F-box protein At2g38590, found in Arabidopsis thaliana (Mouse-ear cress).